Reading from the N-terminus, the 543-residue chain is Chaperonin GroEL 7 (543 aa).

Residues 30–33 (TLGP), K51, 87–91 (DGTTT), G415, and D496 contribute to the ATP site.

The protein belongs to the chaperonin (HSP60) family. Forms a cylinder of 14 subunits composed of two heptameric rings stacked back-to-back. Interacts with the co-chaperonin GroES.

It is found in the cytoplasm. The catalysed reaction is ATP + H2O + a folded polypeptide = ADP + phosphate + an unfolded polypeptide.. In terms of biological role, together with its co-chaperonin GroES, plays an essential role in assisting protein folding. The GroEL-GroES system forms a nano-cage that allows encapsulation of the non-native substrate proteins and provides a physical environment optimized to promote and accelerate protein folding. This chain is Chaperonin GroEL 7, found in Bradyrhizobium diazoefficiens (strain JCM 10833 / BCRC 13528 / IAM 13628 / NBRC 14792 / USDA 110).